The primary structure comprises 300 residues: Regulatory protein NocR (300 aa).

Residues 1–59 enclose the HTH lysR-type domain; the sequence is MIQSRQLEAFRAVMLTGGMTSAANLVRITQPAISRLIRDLEEEIGISLFERTGNRLRPT. A DNA-binding region (H-T-H motif) is located at residues 19 to 38; it reads MTSAANLVRITQPAISRLIR.

This sequence belongs to the LysR transcriptional regulatory family.

Positive regulatory protein for the noc operon involved in nopaline catabolism and uptake. This chain is Regulatory protein NocR (nocR), found in Agrobacterium fabrum (strain C58 / ATCC 33970) (Agrobacterium tumefaciens (strain C58)).